The following is a 637-amino-acid chain: Formate--tetrahydrofolate ligase (637 aa).

81 to 88 serves as a coordination point for ATP; the sequence is TPLGEGKS.

The protein belongs to the formate--tetrahydrofolate ligase family. As to quaternary structure, homodimer.

The catalysed reaction is (6S)-5,6,7,8-tetrahydrofolate + formate + ATP = (6R)-10-formyltetrahydrofolate + ADP + phosphate. The protein operates within one-carbon metabolism; tetrahydrofolate interconversion. This Spinacia oleracea (Spinach) protein is Formate--tetrahydrofolate ligase.